Here is a 308-residue protein sequence, read N- to C-terminus: Phenylcoumaran benzylic ether reductase Pyrc5 (308 aa).

NADP(+)-binding positions include G11–G17, R36, and K45. Residue K133 is the Proton acceptor of the active site. R137 is a binding site for NADP(+).

The protein belongs to the NmrA-type oxidoreductase family. Isoflavone reductase subfamily.

The enzyme catalyses (-)-dehydrodiconiferyl alcohol + NADPH + H(+) = (S)-isodihydrodehydrodiconiferyl alcohol + NADP(+). It carries out the reaction (+)-dehydrodiconiferyl alcohol + NADPH + H(+) = (R)-isodihydrodehydrodiconiferyl alcohol + NADP(+). Oxidoreductase involved in lignan biosynthesis. Catalyzes the NADPH-dependent reduction of phenylcoumaran benzylic ethers. Converts dehydrodiconiferyl alcohol (DDC) to isodihydrodehydrodiconiferyl alcohol (IDDDC). This is Phenylcoumaran benzylic ether reductase Pyrc5 from Pyrus communis (Pear).